Reading from the N-terminus, the 507-residue chain is Cytochrome P450 71D2 (507 aa).

A run of 2 helical transmembrane segments spans residues 6–26 (LPFNLVTFFIFLFFVFLLIYG) and 447–467 (ICPGMTFGLANVHLVLALLLY). C448 serves as a coordination point for heme.

It belongs to the cytochrome P450 family.

It localises to the membrane. The polypeptide is Cytochrome P450 71D2 (Catharanthus roseus (Madagascar periwinkle)).